A 260-amino-acid chain; its full sequence is 4-hydroxy-tetrahydrodipicolinate reductase (260 aa).

NAD(+) contacts are provided by residues 12-17 (GFRGKM), 92-94 (GTT), and 118-121 (APNF). His148 acts as the Proton donor/acceptor in catalysis. His149 serves as a coordination point for (S)-2,3,4,5-tetrahydrodipicolinate. Lys152 (proton donor) is an active-site residue. 158-159 (GT) is a binding site for (S)-2,3,4,5-tetrahydrodipicolinate.

This sequence belongs to the DapB family.

The protein localises to the cytoplasm. It catalyses the reaction (S)-2,3,4,5-tetrahydrodipicolinate + NAD(+) + H2O = (2S,4S)-4-hydroxy-2,3,4,5-tetrahydrodipicolinate + NADH + H(+). It carries out the reaction (S)-2,3,4,5-tetrahydrodipicolinate + NADP(+) + H2O = (2S,4S)-4-hydroxy-2,3,4,5-tetrahydrodipicolinate + NADPH + H(+). It participates in amino-acid biosynthesis; L-lysine biosynthesis via DAP pathway; (S)-tetrahydrodipicolinate from L-aspartate: step 4/4. Its function is as follows. Catalyzes the conversion of 4-hydroxy-tetrahydrodipicolinate (HTPA) to tetrahydrodipicolinate. This chain is 4-hydroxy-tetrahydrodipicolinate reductase, found in Lactococcus lactis subsp. cremoris (strain SK11).